Reading from the N-terminus, the 427-residue chain is Kynureninase (427 aa).

Pyridoxal 5'-phosphate contacts are provided by residues threonine 104, threonine 105, 132 to 135, aspartate 213, histidine 216, and tyrosine 238; that span reads FPSD. N6-(pyridoxal phosphate)lysine is present on lysine 239. Pyridoxal 5'-phosphate is bound by residues tryptophan 267 and threonine 295.

It belongs to the kynureninase family. As to quaternary structure, homodimer. Pyridoxal 5'-phosphate serves as cofactor.

It carries out the reaction L-kynurenine + H2O = anthranilate + L-alanine + H(+). The enzyme catalyses 3-hydroxy-L-kynurenine + H2O = 3-hydroxyanthranilate + L-alanine + H(+). The protein operates within amino-acid degradation; L-kynurenine degradation; L-alanine and anthranilate from L-kynurenine: step 1/1. Its pathway is cofactor biosynthesis; NAD(+) biosynthesis; quinolinate from L-kynurenine: step 2/3. In terms of biological role, catalyzes the cleavage of L-kynurenine (L-Kyn) and L-3-hydroxykynurenine (L-3OHKyn) into anthranilic acid (AA) and 3-hydroxyanthranilic acid (3-OHAA), respectively. The chain is Kynureninase from Shouchella clausii (strain KSM-K16) (Alkalihalobacillus clausii).